The chain runs to 139 residues: Heavy metal-associated isoprenylated plant protein 13 (139 aa).

In terms of domain architecture, HMA spans 3–70; that stretch reads PMKAVLQLSI…LCNTELVSVE (68 aa). The disordered stretch occupies residues 70–94; it reads EVVKPPEKKPEPEKPAPPKPAPAPA. Over residues 73–85 the composition is skewed to basic and acidic residues; it reads KPPEKKPEPEKPA. At cysteine 136 the chain carries Cysteine methyl ester. The S-farnesyl cysteine moiety is linked to residue cysteine 136. The propeptide at 137 to 139 is removed in mature form; sequence VIM.

Belongs to the HIPP family.

Its function is as follows. Probable heavy-metal-binding protein. This chain is Heavy metal-associated isoprenylated plant protein 13, found in Arabidopsis thaliana (Mouse-ear cress).